We begin with the raw amino-acid sequence, 212 residues long: MGTEFNGLFDEWAHTYDSFVQGEDIQYKEVFAHYEDILEDVVNKSFGNVLEFGVGTGNLTNKLLLAGRTVYGIEPSREMRTIAKEKLPKEFSITEGDFLSFEVPNSIDTIVSTYAFHHLTDDEKDVAIAKYSQLLNKGGKIVFADTIFADQDAYDKTVEAAKQRGFHQLANDLQTEYYTRIPIMQSIFENNGFHVTFTRLNHFVWVMEATKQ.

The S-adenosyl-L-methionine site is built by Gly-53, Glu-74, and Asp-97.

This sequence belongs to the methyltransferase superfamily. YrrT family.

Could be a S-adenosyl-L-methionine-dependent methyltransferase. This is an uncharacterized protein from Bacillus mycoides (strain KBAB4) (Bacillus weihenstephanensis).